The following is a 417-amino-acid chain: Serine hydroxymethyltransferase (417 aa).

(6S)-5,6,7,8-tetrahydrofolate is bound by residues Leu121 and 125–127; that span reads GHL. Lys229 bears the N6-(pyridoxal phosphate)lysine mark. Position 355 to 357 (355 to 357) interacts with (6S)-5,6,7,8-tetrahydrofolate; sequence SPF.

It belongs to the SHMT family. Homodimer. Pyridoxal 5'-phosphate serves as cofactor.

It localises to the cytoplasm. It carries out the reaction (6R)-5,10-methylene-5,6,7,8-tetrahydrofolate + glycine + H2O = (6S)-5,6,7,8-tetrahydrofolate + L-serine. Its pathway is one-carbon metabolism; tetrahydrofolate interconversion. It functions in the pathway amino-acid biosynthesis; glycine biosynthesis; glycine from L-serine: step 1/1. In terms of biological role, catalyzes the reversible interconversion of serine and glycine with tetrahydrofolate (THF) serving as the one-carbon carrier. This reaction serves as the major source of one-carbon groups required for the biosynthesis of purines, thymidylate, methionine, and other important biomolecules. Also exhibits THF-independent aldolase activity toward beta-hydroxyamino acids, producing glycine and aldehydes, via a retro-aldol mechanism. The protein is Serine hydroxymethyltransferase of Buchnera aphidicola subsp. Baizongia pistaciae (strain Bp).